Consider the following 818-residue polypeptide: H(+)/Cl(-) exchange transporter 3 (818 aa).

At 1-125 (MESEQLFHRG…WEMTKSLYDA (125 aa)) the chain is on the cytoplasmic side. Short sequence motifs (di-leucine internalization motif; mediates targeting to late endosome and lysosome membranes) lie at residues 28-29 (LL), 46-47 (LL), and 71-75 (LLDLL). The helical transmembrane segment at 126 to 163 (WSGWLVVTLTGLASGALAGLIDIAADWMTDLKEGICLS) threads the bilayer. Asparagine 177 is a glycosylation site (N-linked (GlcNAc...) asparagine). A helical transmembrane segment spans residues 209-232 (MNYIMYIFWALSFAFLAVSLVKVF). Residues 238–242 (GSGIP) carry the Selectivity filter part_1 motif. Serine 239 contributes to the chloride binding site. Residues 241-248 (IPEIKTIL) constitute an intramembrane region (helical). 2 helical membrane passes run 258–276 (GKWT…VASG) and 282–301 (EGPL…YLFP). Residues 280–284 (GKEGP) carry the Selectivity filter part_2 motif. 2 intramembrane regions (helical) span residues 313-325 (VLSA…VSVA) and 329-337 (PIGGVLFSL). Helical transmembrane passes span 349-367 (LWRS…RSIN), 391-416 (FPFI…AWCR), and 423-443 (FGKY…VIAF). 2 N-linked (GlcNAc...) asparagine glycosylation sites follow: asparagine 451 and asparagine 479. A run of 2 helical transmembrane segments spans residues 500-520 (IWQL…TFGI) and 525-544 (GLFI…VGIA). A Selectivity filter part_3 motif is present at residues 525 to 529 (GLFIP). Phenylalanine 527 is a binding site for chloride. 2 consecutive intramembrane regions (helical) follow at residues 572-586 (GLYA…LGGV) and 590-601 (TVSLVVIVFELT). Positions 602–605 (GGLE) form an intramembrane region, note=Loop between two helices. A helical membrane pass occupies residues 606 to 624 (YIVPLMAAVMTSKWVGDAF). Residues 625-818 (GREGIYEAHI…NQDPASIMFN (194 aa)) are Cytoplasmic-facing. Tyrosine 630 is a binding site for chloride. CBS domains lie at 658 to 722 (MRPR…ARKK) and 755 to 812 (LDMS…NQDP). ATP is bound by residues 689-691 (YNG) and 796-799 (TKKD).

The protein belongs to the chloride channel (TC 2.A.49) family. ClC-3/CLCN3 subfamily. As to quaternary structure, monomer and homodimer. Forms heterodimers with CLCN4. Interacts with GOPC, PDZK1 and NHERF1/EBP50. In terms of processing, N-glycosylated. Expressed primarily in tissues derived from neuroectoderm. Within the brain, its expression is particularly evident in the hippocampus, olfactory cortex, and olfactory bulb. Highly expressed in aortic and coronary vascular smooth muscle cells, and aortic endothelial cells. Also expressed in tracheal and alveolar epithelial cells, and intima and media of the pulmonary vessels. Expressed in bronchus and colon (at protein level).

Its subcellular location is the early endosome membrane. The protein localises to the late endosome membrane. The protein resides in the lysosome membrane. It is found in the cell membrane. It localises to the golgi apparatus membrane. Its subcellular location is the cell projection. The protein localises to the ruffle membrane. In terms of biological role, strongly outwardly rectifying, electrogenic H(+)/Cl(-)exchanger which mediates the exchange of chloride ions against protons. The CLC channel family contains both chloride channels and proton-coupled anion transporters that exchange chloride or another anion for protons. The presence of conserved gating glutamate residues is typical for family members that function as antiporters. Strongly outwardly rectifying, electrogenic H(+)/Cl(-)exchanger which mediates the exchange of chloride ions against protons. The chain is H(+)/Cl(-) exchange transporter 3 (CLCN3) from Homo sapiens (Human).